We begin with the raw amino-acid sequence, 831 residues long: AMP deaminase (831 aa).

Disordered regions lie at residues N26–P45, N66–N110, and N130–T149. Phosphoserine is present on residues S79 and S84. Zn(2+)-binding residues include H319 and H321. Residues H321 and K390–Y395 contribute to the substrate site. H587 provides a ligand contact to Zn(2+). E590 contributes to the substrate binding site. H609 (proton acceptor) is an active-site residue. A Zn(2+)-binding site is contributed by D664. D665–Q668 is a substrate binding site. S758, S776, S780, and S782 each carry phosphoserine.

It belongs to the metallo-dependent hydrolases superfamily. Adenosine and AMP deaminases family. In terms of assembly, homotetramer. Zn(2+) is required as a cofactor.

Its subcellular location is the cytoplasm. It catalyses the reaction AMP + H2O + H(+) = IMP + NH4(+). Its pathway is purine metabolism; IMP biosynthesis via salvage pathway; IMP from AMP: step 1/1. Functionally, AMP deaminase plays a critical role in energy metabolism. This chain is AMP deaminase (ada1), found in Schizosaccharomyces pombe (strain 972 / ATCC 24843) (Fission yeast).